The chain runs to 362 residues: Microfibril-associated glycoprotein 3 (362 aa).

Residues 1 to 19 form the signal peptide; it reads MKLHCCLFTLVASIIVPAA. At 20 to 146 the chain is on the extracellular side; that stretch reads FVLEDVDFNQ…TLRVIFTSGD (127 aa). N-linked (GlcNAc...) asparagine glycans are attached at residues Asn-36, Asn-41, and Asn-110. An Ig-like C2-type domain is found at 45–137; sequence PSSFELSASS…SPIRASYSVT (93 aa). Cys-73 and Cys-124 form a disulfide bridge. The chain crosses the membrane as a helical span at residues 147–167; that stretch reads MSVYYMIVCLIAFTITLILNV. Residues 168 to 362 lie on the Cytoplasmic side of the membrane; that stretch reads TRLCMMSSHL…KDGAYENSQL (195 aa). Disordered stretches follow at residues 282-306 and 319-362; these read GIYVINPEMGRSNSPGGDSDDGSLN and HLQS…NSQL. The span at 319–337 shows a compositional bias: polar residues; sequence HLQSETKSIDTESQGSSHF.

Post-translationally, glycosylated.

It is found in the cell membrane. Functionally, component of the elastin-associated microfibrils. The polypeptide is Microfibril-associated glycoprotein 3 (MFAP3) (Pongo abelii (Sumatran orangutan)).